A 668-amino-acid chain; its full sequence is Receptor for retinol uptake STRA6 (668 aa).

Residues 1-15 (MSTQAAGNQTSSGAT) are compositionally biased toward polar residues. Positions 1–28 (MSTQAAGNQTSSGATDSEDSYDSWYIDE) are disordered. At 1-51 (MSTQAAGNQTSSGATDSEDSYDSWYIDEPQGGQELQPEGLVPSCQPNVPPS) the chain is on the extracellular side. N-linked (GlcNAc...) asparagine glycosylation is present at N8. Residues 52-72 (LYHTCLAVLSILVLFLLAMLV) traverse the membrane as a helical segment. The Cytoplasmic portion of the chain corresponds to 73–101 (RRRQLWPRCGHGRPGLPSPVDFLTGDRPR). A helical transmembrane segment spans residues 102-122 (TVPAAVFMVLFSSLCLLLPTE). Residues 123 to 145 (DPLPFLSLASPPGRDGEAETSRG) lie on the Extracellular side of the membrane. A helical membrane pass occupies residues 146-166 (PWKILALLYYPALYYPLAACA). The Cytoplasmic portion of the chain corresponds to 167–169 (TVR). The helical transmembrane segment at 170-190 (HGAAHLLGSLLSWAHLGVQVW) threads the bilayer. The Extracellular portion of the chain corresponds to 191–206 (QRAECPESPKIYKYYS). Residues 207 to 227 (LLASLPLLLGLGFLSLWYPVQ) traverse the membrane as a helical segment. Residues 228-296 (LVRSFGHGAA…PQRGFRLPLK (69 aa)) lie on the Cytoplasmic side of the membrane. Residues 236–294 (AATGSKGLQSSYSEEYLRTLLCQKKLKSSSHTCKRGFASQAWMYFRHSVYIPQRGFRLP) form an interaction with RBP1 region. A helical transmembrane segment spans residues 297–317 (LVLSVTLTGTAIYQVALLLLV). Residues 318–368 (GVVPTIQKVRAGITTDVSYLLAGFGIVLSEDRQEVVELVKHHLWALEVCYI) lie on the Extracellular side of the membrane. Residues 369-389 (SALVLSCLLTFLMLVHSLVTH) form a helical membrane-spanning segment. At 390–423 (RTNLRALHRGGALDIGPLTQSPRPSRQAIFCWMS) the chain is on the cytoplasmic side. A helical transmembrane segment spans residues 424 to 444 (FTAYQTAFTCLGLLVQQILFF). Topologically, residues 445-474 (LGTLTLAFLVFMPMLHGRNLLLLHYLKSSW) are extracellular. Residues 475-495 (PFWLTLALAVTLQNAAAHWAF) form a helical membrane-spanning segment. At 496–510 (LDTHHGRPGLTNRRA) the chain is on the cytoplasmic side. Positions 511–548 (LYAATFLLFPVNVLVGTMVAAWRVLLSALYNAVHLGRM) form an intramembrane region, helical. At 549–668 (DLSLLPLRAA…PGARPNGAQP (120 aa)) the chain is on the cytoplasmic side. At Y642 the chain carries Phosphotyrosine.

Homodimer. Interacts with JAK2 and STAT5. Interacts (via extracellular domains) with RBP4. Interacts (via cytoplasmic domains) with RBP1. In terms of processing, phosphorylated on tyrosine residues in response to RBP4 binding. Phosphorylation requires the presence of LRAT, suggesting it may be triggered by the uptake of retinol that is then metabolized within the cell to retinoids that function as signaling molecules. Expressed in placenta, spleen, retinal blood vessels, and in astrocyte perivascular endfeet. Not detected in the endothelial cells of the choriocapillaris (at protein level).

It is found in the cell membrane. Functions as a retinol transporter. Accepts all-trans retinol from the extracellular retinol-binding protein RBP4, facilitates retinol transport across the cell membrane, and then transfers retinol to the cytoplasmic retinol-binding protein RBP1. Retinol uptake is enhanced by LRAT, an enzyme that converts retinol to all-trans retinyl esters, the storage forms of vitamin A. Contributes to the activation of a signaling cascade that depends on retinol transport and LRAT-dependent generation of retinol metabolites that then trigger activation of JAK2 and its target STAT5, and ultimately increase the expression of SOCS3 and inhibit cellular responses to insulin. Important for the homeostasis of vitamin A and its derivatives, such as retinoic acid. STRA6-mediated transport is particularly important in the eye, and under conditions of dietary vitamin A deficiency. Does not transport retinoic acid. This chain is Receptor for retinol uptake STRA6 (STRA6), found in Bos taurus (Bovine).